A 790-amino-acid polypeptide reads, in one-letter code: MMEAKPKRRIVTENGDTGEDLVLATLIGNGDDVGPLVRHAFEMGRPEPLVHQLKNVARKKEAEIEDLCKTHYEEFIVAVDELRGVLVDAEELKSDLASDNFRLQEVGSALLVKLEELLESYAVKKNVTEAIKMSKICVQALELCVKCNSYISEGQFYHALKTMDLIEKSYLKLIPLKVLKLVIERRIPVIKTHIEKKVCSQFNEWLVHIRSSSKNIGQTAIGLTASARQREEEMLERQRRAEEQNTGGLGELAYTLDVEDSEQDSVLKFDLTPLYRAYHIHTILGVPERFRDYYYENRLLQLQSDLQITYTQPFVESYQTFLAQVAGYFIVEDRVIRTAGDFLLADQVETMWETAISKIVAILENQFARMDSPTHLLLVKDYVTLLGTTLRQYGYEVGPVLDALDKSRDKYHELLLEECRKQIVTAITEDTYQQMVIKKEADYENNVLSFNLQTSDIMPAFTYIAPFSSMVPDVCRIIRSYIKGSVDYLSYGVNTNFFSVLRKYLDKILIDVLNEVILETISNNSIGVSQAMQIAANISFLEKASDYFLRHAAQLCGIPSRSVERPQASLAAKVVLKTSRDAAYLALLNVVNTKLDEFMKLTENVNWTTEEMPQGPHEYINEVVIYLETVMSTAQQILPMDALYKVGVGAIEHISNSIVSTFLSDSIKRFNANAVSAINHDLRVIENFADERYHSSGLNEIYKEGSFRSYLVEARQLINLLSSSQPENFMNPVIRERNYNTLDYKKVATICEKFKDSADGIFGSLANRNTKLTAKKKSMDMLKKRLKEFN.

The stretch at 49-70 forms a coiled coil; the sequence is LVHQLKNVARKKEAEIEDLCKT.

This sequence belongs to the SEC15 family. As to quaternary structure, the exocyst complex is composed of SEC3, SEC5, SEC6, SEC8, SEC10, EXO70A1 and EXO84B.

The protein resides in the cytoplasm. Its subcellular location is the cytosol. In terms of biological role, component of the exocyst complex involved in the docking of exocytic vesicles with fusion sites on the plasma membrane during regulated or polarized secretion. Involved in polarized cell growth and organ morphogenesis. During cytokinesis, involved in cell plate initiation, cell plate maturation and formation of new primary cell wall. The chain is Exocyst complex component SEC15A (SEC15A) from Arabidopsis thaliana (Mouse-ear cress).